Consider the following 233-residue polypeptide: Protein AC81 (233 aa).

A run of 2 helical transmembrane segments spans residues 171–191 (SFQTVLLTCAILLLLFNVEKF) and 194–214 (INLLIILLILLSLFCHNNYII).

It is found in the host nucleus. The protein resides in the host membrane. Its subcellular location is the virion. In terms of biological role, plays an essential role in the assembly of nucleocapsids with envelopes. The sequence is that of Protein AC81 (AC81) from Autographa californica nuclear polyhedrosis virus (AcMNPV).